A 502-amino-acid chain; its full sequence is ATP synthase subunit alpha (502 aa).

Position 169–176 (169–176 (GDRQTGKT)) interacts with ATP.

Belongs to the ATPase alpha/beta chains family. F-type ATPases have 2 components, CF(1) - the catalytic core - and CF(0) - the membrane proton channel. CF(1) has five subunits: alpha(3), beta(3), gamma(1), delta(1), epsilon(1). CF(0) has three main subunits: a(1), b(2) and c(9-12). The alpha and beta chains form an alternating ring which encloses part of the gamma chain. CF(1) is attached to CF(0) by a central stalk formed by the gamma and epsilon chains, while a peripheral stalk is formed by the delta and b chains.

It localises to the cell membrane. It carries out the reaction ATP + H2O + 4 H(+)(in) = ADP + phosphate + 5 H(+)(out). Its function is as follows. Produces ATP from ADP in the presence of a proton gradient across the membrane. The alpha chain is a regulatory subunit. The chain is ATP synthase subunit alpha from Bacillus velezensis (strain DSM 23117 / BGSC 10A6 / LMG 26770 / FZB42) (Bacillus amyloliquefaciens subsp. plantarum).